A 107-amino-acid chain; its full sequence is SH3 domain-binding glutamic acid-rich-like protein 2 (107 aa).

The SH3-binding signature appears at 61–67 (QGNPLPP).

The protein belongs to the SH3BGR family.

It localises to the nucleus. This is SH3 domain-binding glutamic acid-rich-like protein 2 (SH3BGRL2) from Pongo abelii (Sumatran orangutan).